The chain runs to 214 residues: Thymidylate kinase (214 aa).

Position 9–16 (9–16) interacts with ATP; sequence GIEGCGKT.

The protein belongs to the thymidylate kinase family.

It catalyses the reaction dTMP + ATP = dTDP + ADP. Phosphorylation of dTMP to form dTDP in both de novo and salvage pathways of dTTP synthesis. This is Thymidylate kinase from Geotalea daltonii (strain DSM 22248 / JCM 15807 / FRC-32) (Geobacter daltonii).